The sequence spans 118 residues: Immunoglobulin lambda variable 2-8 (118 aa).

The signal sequence occupies residues 1–19 (MAWALLLLTLLTQGTGSWA). Gln20 bears the Pyrrolidone carboxylic acid mark. The segment at 20–44 (QSALTQPPSASGSPGQSVTISCTGT) is framework-1. An Ig-like domain is found at 20–118 (QSALTQPPSA…CSSYAGSNNF (99 aa)). An intrachain disulfide couples Cys41 to Cys109. Residues 45 to 53 (SSDVGGYNY) are complementarity-determining-1. The interval 54–70 (VSWYQQHPGKAPKLMIY) is framework-2. The interval 71 to 73 (EVS) is complementarity-determining-2. A framework-3 region spans residues 74-109 (KRPSGVPDRFSGSKSGNTASLTVSGLQAEDEADYYC). The segment at 76-97 (PSGVPDRFSGSKSGNTASLTVS) is disordered. Polar residues predominate over residues 85–97 (GSKSGNTASLTVS). Residues 110 to 118 (SSYAGSNNF) form a complementarity-determining-3 region.

Immunoglobulins are composed of two identical heavy chains and two identical light chains; disulfide-linked.

It localises to the secreted. The protein localises to the cell membrane. In terms of biological role, v region of the variable domain of immunoglobulin light chains that participates in the antigen recognition. Immunoglobulins, also known as antibodies, are membrane-bound or secreted glycoproteins produced by B lymphocytes. In the recognition phase of humoral immunity, the membrane-bound immunoglobulins serve as receptors which, upon binding of a specific antigen, trigger the clonal expansion and differentiation of B lymphocytes into immunoglobulins-secreting plasma cells. Secreted immunoglobulins mediate the effector phase of humoral immunity, which results in the elimination of bound antigens. The antigen binding site is formed by the variable domain of one heavy chain, together with that of its associated light chain. Thus, each immunoglobulin has two antigen binding sites with remarkable affinity for a particular antigen. The variable domains are assembled by a process called V-(D)-J rearrangement and can then be subjected to somatic hypermutations which, after exposure to antigen and selection, allow affinity maturation for a particular antigen. This is Immunoglobulin lambda variable 2-8 from Homo sapiens (Human).